A 531-amino-acid chain; its full sequence is MEKRALIAVVLSILFFYGYTALFSPPPKETPKPVATATQSQPAQQVTAAPVPVAVPAQPQPAVAARDVSVDTPAYSVTFSTQGGSIKRLDLKRYHETAGPGGKNVTLVSEDNPSNYTIGLRAPGFGLDQNAVFVPSADALTVGPGEKKQLSFTWVSPAGVTVTKTYNFSGDGYGLEIQYQVTNSGSARVSSPVQTVQTYPLVPKVKESRFETFGPATFAQDKLFEDKVKDLESGAKTHAAPLWSGFADKYFLSAVLAHEGSMAAATIRKTASGYLENTISSPELSLNPGEGRALTYRLFFGPKDIDVLKAQGNSLERAINLGWFAMLAKPLLHSLKFFHNYTGNYGIAIIIITVIIKVIFYPLTHSSYKSMKEMQKLQPKMQQLREKYKNDREAMNRAMMELYQTHKVNPVGGCLPMLVQIPVFFALYKALMFSIELRHAPFMLWITDLAAKDPYYVTPIIMGVTMVIQQKMTPSQMDPVQQKMMMALPVVFTFMFLNFPSGLVLYWLVNNVLTIIQQYYINRSISTAEAK.

4 consecutive transmembrane segments (helical) span residues 5-25 (ALIA…LFSP), 343-363 (GNYG…FYPL), 415-435 (LPML…MFSI), and 489-509 (PVVF…YWLV).

This sequence belongs to the OXA1/ALB3/YidC family. Type 1 subfamily. In terms of assembly, interacts with the Sec translocase complex via SecD. Specifically interacts with transmembrane segments of nascent integral membrane proteins during membrane integration.

It localises to the cell inner membrane. Functionally, required for the insertion and/or proper folding and/or complex formation of integral membrane proteins into the membrane. Involved in integration of membrane proteins that insert both dependently and independently of the Sec translocase complex, as well as at least some lipoproteins. Aids folding of multispanning membrane proteins. The chain is Membrane protein insertase YidC from Geobacter sulfurreducens (strain ATCC 51573 / DSM 12127 / PCA).